The chain runs to 631 residues: Probable potassium transport system protein Kup 1 (631 aa).

Transmembrane regions (helical) follow at residues 17-37 (LALG…LYAL), 55-75 (LSLI…MIIF), 101-121 (PLFY…GMLT), 140-160 (LYPY…SLQA), 166-186 (IGYL…ILGI), 217-237 (FLLG…ADIG), 249-269 (FFIA…NLIV), 277-297 (PFFM…ATVA), 338-358 (IYVP…CLAF), 370-390 (IAVN…AVSI), 395-415 (TFNV…FLGA), and 420-440 (FITG…IMYS).

Belongs to the HAK/KUP transporter (TC 2.A.72) family.

Its subcellular location is the cell inner membrane. The catalysed reaction is K(+)(in) + H(+)(in) = K(+)(out) + H(+)(out). In terms of biological role, transport of potassium into the cell. Likely operates as a K(+):H(+) symporter. The protein is Probable potassium transport system protein Kup 1 of Legionella pneumophila (strain Corby).